The sequence spans 759 residues: Short transient receptor potential channel 1 (759 aa).

Residues 1-30 form a disordered region; sequence MMAALYPSTDLSGASSSSLPSSPSSSSPNE. Topologically, residues 1–352 are cytoplasmic; sequence MMAALYPSTD…GRIIHTPFMK (352 aa). A compositionally biased stretch (low complexity) spans 15–28; that stretch reads SSSSLPSSPSSSSP. 3 ANK repeats span residues 46 to 75, 83 to 112, and 124 to 153; these read LNEK…SGDL, LGRN…QKLM, and MDVA…SLPK. The helical transmembrane segment at 353–373 threads the bilayer; it reads FIIHGASYFTFLLLLNLYSLV. The Extracellular segment spans residues 374–381; sequence YNEDKKNT. The chain crosses the membrane as a helical span at residues 382–402; the sequence is MGPALERIDYLLILWIIGMIW. The Cytoplasmic segment spans residues 403–461; that stretch reads SDIKRLWYEGLEDFLEESRNQLSFVMNSLYLATFALKVVAHNKFHDFADRKDWDAFHPT. Residues 462 to 482 traverse the membrane as a helical segment; it reads LVAEGLFAFANVLSYLRLFFM. Residues 483 to 505 are Extracellular-facing; that stretch reads YTTSSILGPLQISMGQMLQDFGK. A helical transmembrane segment spans residues 506–526; sequence FLGMFLLVLFSFTIGLTQLYD. Over 527-552 the chain is Cytoplasmic; it reads KGYTPKEQKDCVGIFCEQQSNDTFHS. The helical transmembrane segment at 553–573 threads the bilayer; the sequence is FIGTCFALFWYIFSLAHVAIF. Over 574 to 582 the chain is Extracellular; it reads VTRFSYGEE. The helical transmembrane segment at 583-603 threads the bilayer; it reads LQSFVGAVIVGTYNVVVVIVL. The Cytoplasmic portion of the chain corresponds to 604-759; that stretch reads TKLLVAMLHK…SKYAMFYPRN (156 aa).

The protein belongs to the transient receptor (TC 1.A.4) family. STrpC subfamily. TRPC1 sub-subfamily. Homotetramer and heterotetramer with TRPC4 and/or TRPC5. Interacts with TRPC4 and TRPC5. Interacts with ITPR3. Interacts with MX1 and RNF24. Interacts with FKBP4. Interacts with TRPC4AP. Interacts with PLSCR1. Interacts with PKD2L2. Forms a heterotetramer with PKD2 with a 2:2 stoichiometry; has distinct channel properties separate from PKD2 or TRPC1 homomers alone. Activation of PRKCA induces phosphorylation of TRPC1 and subsequent Ca2+ entry into cells.

Its subcellular location is the cell membrane. It catalyses the reaction Ca(2+)(in) = Ca(2+)(out). Its function is as follows. Forms a receptor-activated non-selective calcium permeant cation channel. Probably is operated by a phosphatidylinositol second messenger system activated by receptor tyrosine kinases or G-protein coupled receptors. Also activated by intracellular calcium store depletion. In Oryctolagus cuniculus (Rabbit), this protein is Short transient receptor potential channel 1 (TRPC1).